We begin with the raw amino-acid sequence, 389 residues long: Homoserine O-acetyltransferase (389 aa).

In terms of domain architecture, AB hydrolase-1 spans 63-371; the sequence is NAVLVLHALT…SSDYGHDGFL (309 aa). Ser168 functions as the Nucleophile in the catalytic mechanism. Arg240 provides a ligand contact to substrate. Active-site residues include Asp334 and His367. Asp368 provides a ligand contact to substrate.

This sequence belongs to the AB hydrolase superfamily. MetX family. As to quaternary structure, homodimer.

It is found in the cytoplasm. The enzyme catalyses L-homoserine + acetyl-CoA = O-acetyl-L-homoserine + CoA. The protein operates within amino-acid biosynthesis; L-methionine biosynthesis via de novo pathway; O-acetyl-L-homoserine from L-homoserine: step 1/1. Transfers an acetyl group from acetyl-CoA to L-homoserine, forming acetyl-L-homoserine. The chain is Homoserine O-acetyltransferase from Clavibacter michiganensis subsp. michiganensis (strain NCPPB 382).